The sequence spans 134 residues: Small ribosomal subunit protein uS9 (134 aa).

Positions Asp-109–Arg-134 are disordered. The segment covering Pro-118–Arg-134 has biased composition (basic residues).

It belongs to the universal ribosomal protein uS9 family.

This Methanococcus vannielii (strain ATCC 35089 / DSM 1224 / JCM 13029 / OCM 148 / SB) protein is Small ribosomal subunit protein uS9.